The chain runs to 352 residues: Anthranilate phosphoribosyltransferase (352 aa).

5-phospho-alpha-D-ribose 1-diphosphate contacts are provided by residues G91, 94–95 (GD), T99, 101–104 (NIST), 119–127 (KHGNRASSS), and S131. Position 91 (G91) interacts with anthranilate. Residue S103 participates in Mg(2+) binding. N122 provides a ligand contact to anthranilate. An anthranilate-binding site is contributed by R177. Mg(2+)-binding residues include D235 and E236.

The protein belongs to the anthranilate phosphoribosyltransferase family. In terms of assembly, homodimer. Mg(2+) is required as a cofactor.

It catalyses the reaction N-(5-phospho-beta-D-ribosyl)anthranilate + diphosphate = 5-phospho-alpha-D-ribose 1-diphosphate + anthranilate. It functions in the pathway amino-acid biosynthesis; L-tryptophan biosynthesis; L-tryptophan from chorismate: step 2/5. Its function is as follows. Catalyzes the transfer of the phosphoribosyl group of 5-phosphorylribose-1-pyrophosphate (PRPP) to anthranilate to yield N-(5'-phosphoribosyl)-anthranilate (PRA). The polypeptide is Anthranilate phosphoribosyltransferase (Arthrobacter sp. (strain FB24)).